The sequence spans 489 residues: CBL-interacting serine/threonine-protein kinase 12 (489 aa).

Positions 26-280 constitute a Protein kinase domain; sequence YEMGKLLGHG…FPEIMENSWF (255 aa). Residues 32 to 40 and K55 contribute to the ATP site; that span reads LGHGTFAKV. D148 acts as the Proton acceptor in catalysis. The activation loop stretch occupies residues 166–195; sequence DFGLSAVSDQIRQDGLFHTFCGTPAYVAPE. S170 bears the Phosphoserine mark. Residue T184 is modified to Phosphothreonine. The 25-residue stretch at 336–360 folds into the NAF domain; sequence PRPASLNAFDIISFSQGFDLSGLFD. Residues 363–392 form a PPI region; the sequence is GEGSRFVSGAPVSKIISKLEEIAKVVSFTV.

Belongs to the protein kinase superfamily. CAMK Ser/Thr protein kinase family. SNF1 subfamily. Interacts with CBL2 and CBL3. Mn(2+) serves as cofactor. As to expression, expressed in roots and shoots.

It carries out the reaction L-seryl-[protein] + ATP = O-phospho-L-seryl-[protein] + ADP + H(+). The enzyme catalyses L-threonyl-[protein] + ATP = O-phospho-L-threonyl-[protein] + ADP + H(+). In terms of biological role, CIPK serine-threonine protein kinases interact with CBL proteins. Binding of a CBL protein to the regulatory NAF domain of CIPK protein lead to the activation of the kinase in a calcium-dependent manner. The sequence is that of CBL-interacting serine/threonine-protein kinase 12 (CIPK12) from Arabidopsis thaliana (Mouse-ear cress).